The following is a 472-amino-acid chain: MKRGALLVPFVPLALACVDPGDSNHSCASVFSVSSAAAASFCATFTVSAVTETTGVPAALLSNCDYKTKHLSSACSCLGPATAAAPTQTSAVTPTVAPTTLKANAVAPTTEAPAPTKSSTFAGNGGTTCTVTEYAAISSAVASCSNILLSDVYAPPSSTIDLQNLQTGAAVIFAGTTTFGDTPDDDFDPIVISGTDVTITGADGHVIDGNGAAYWDGKGSNGGSSKPDHFIVAKHMYYSRIENLNIQNWPVHCFDIEHTENLIISGITLDNSAGDAPNSASGSKPAAHNSDGFDIKSSTNLTLQNSWVHNQDDCVAVSSGTDIVVDNMYCYGGHGLSIGSIGGKSDNTVDGVTFSNSQVINSSNGCRIKSNSGTTGEVSNIRYENITVSGITDYGIDIQQDYLNGGPTGKPTNGVKIENITFVDVTGTMSDGKDYYILCGDGSCSNFVFENVGITGGSGDSCNYPTDTCLEA.

The N-terminal stretch at 1–16 is a signal peptide; it reads MKRGALLVPFVPLALA. Asn24 is a glycosylation site (N-linked (GlcNAc...) asparagine). Cys129 and Cys144 are oxidised to a cystine. 3 PbH1 repeats span residues 236 to 258, 259 to 297, and 298 to 319; these read MYYS…DIEH, TENL…DIKS, and STNL…AVSS. Asn300 carries N-linked (GlcNAc...) asparagine glycosylation. The Proton donor role is filled by Asp312. Cysteines 314 and 330 form a disulfide. The active site involves His334. PbH1 repeat units lie at residues 349–370, 378–400, 412–433, and 444–467; these read VDGV…RIKS, VSNI…DIQQ, TNGV…SDGK, and CSNF…YPTD. Asn361, Asn385, and Asn419 each carry an N-linked (GlcNAc...) asparagine glycan. 2 disulfides stabilise this stretch: Cys439–Cys444 and Cys462–Cys469.

Belongs to the glycosyl hydrolase 28 family.

The protein resides in the secreted. The enzyme catalyses (1,4-alpha-D-galacturonosyl)n+m + H2O = (1,4-alpha-D-galacturonosyl)n + (1,4-alpha-D-galacturonosyl)m.. In terms of biological role, involved in maceration and soft-rotting of plant tissue. Hydrolyzes the 1,4-alpha glycosidic bonds of de-esterified pectate in the smooth region of the plant cell wall. The protein is Probable endopolygalacturonase D (pgaD) of Neosartorya fischeri (strain ATCC 1020 / DSM 3700 / CBS 544.65 / FGSC A1164 / JCM 1740 / NRRL 181 / WB 181) (Aspergillus fischerianus).